The primary structure comprises 251 residues: Extracellular superoxide dismutase [Cu-Zn] (251 aa).

The signal sequence occupies residues 1–15 (MLAFLFYGLLLAACG). Residues 16–24 (SVTMSNPGE) constitute a propeptide that is removed on maturation. 2 disulfides stabilise this stretch: Cys-77–Cys-222 and Cys-139–Cys-221. The N-linked (GlcNAc...) asparagine glycan is linked to Asn-121. Residues His-128, His-130, and His-145 each coordinate Cu cation. His-145, His-153, His-156, and Asp-159 together coordinate Zn(2+). His-195 provides a ligand contact to Cu cation. Positions 230–251 (AAWESQTKERKKRRRESECKTT) are disordered.

This sequence belongs to the Cu-Zn superoxide dismutase family. Homotetramer. Directly interacts with ATP7A/MNK; this interaction is copper-dependent and is required for SOD3 activity. Cu cation is required as a cofactor. The cofactor is Zn(2+).

The protein localises to the secreted. The protein resides in the extracellular space. It localises to the golgi apparatus. Its subcellular location is the trans-Golgi network. It carries out the reaction 2 superoxide + 2 H(+) = H2O2 + O2. Its function is as follows. Protect the extracellular space from toxic effect of reactive oxygen intermediates by converting superoxide radicals into hydrogen peroxide and oxygen. The chain is Extracellular superoxide dismutase [Cu-Zn] (Sod3) from Mus musculus (Mouse).